The sequence spans 547 residues: Chaperonin GroEL 2 (547 aa).

Residues 30–33, Lys-51, 87–91, Gly-415, 479–481, and Asp-495 contribute to the ATP site; these read TLGP, DGTTT, and NAA. The segment at 525-547 is disordered; the sequence is PKEESAAPAGGGMGGMGGMGGMM. The segment covering 533–547 has biased composition (gly residues); sequence AGGGMGGMGGMGGMM.

Belongs to the chaperonin (HSP60) family. As to quaternary structure, forms a cylinder of 14 subunits composed of two heptameric rings stacked back-to-back. Interacts with the co-chaperonin GroES.

Its subcellular location is the cytoplasm. It carries out the reaction ATP + H2O + a folded polypeptide = ADP + phosphate + an unfolded polypeptide.. Its function is as follows. Together with its co-chaperonin GroES, plays an essential role in assisting protein folding. The GroEL-GroES system forms a nano-cage that allows encapsulation of the non-native substrate proteins and provides a physical environment optimized to promote and accelerate protein folding. This is Chaperonin GroEL 2 from Anaeromyxobacter dehalogenans (strain 2CP-C).